The following is a 287-amino-acid chain: Hydroxyethylthiazole kinase (287 aa).

Met-50 serves as a coordination point for substrate. ATP contacts are provided by Arg-126 and Ser-185. Substrate is bound at residue Gly-212.

It belongs to the Thz kinase family. Requires Mg(2+) as cofactor.

The enzyme catalyses 5-(2-hydroxyethyl)-4-methylthiazole + ATP = 4-methyl-5-(2-phosphooxyethyl)-thiazole + ADP + H(+). It functions in the pathway cofactor biosynthesis; thiamine diphosphate biosynthesis; 4-methyl-5-(2-phosphoethyl)-thiazole from 5-(2-hydroxyethyl)-4-methylthiazole: step 1/1. Functionally, catalyzes the phosphorylation of the hydroxyl group of 4-methyl-5-beta-hydroxyethylthiazole (THZ). The protein is Hydroxyethylthiazole kinase of Methanobrevibacter smithii (strain ATCC 35061 / DSM 861 / OCM 144 / PS).